Here is a 94-residue protein sequence, read N- to C-terminus: Co-chaperonin GroES (94 aa).

It belongs to the GroES chaperonin family. As to quaternary structure, heptamer of 7 subunits arranged in a ring. Interacts with the chaperonin GroEL.

Its subcellular location is the cytoplasm. Functionally, together with the chaperonin GroEL, plays an essential role in assisting protein folding. The GroEL-GroES system forms a nano-cage that allows encapsulation of the non-native substrate proteins and provides a physical environment optimized to promote and accelerate protein folding. GroES binds to the apical surface of the GroEL ring, thereby capping the opening of the GroEL channel. This chain is Co-chaperonin GroES, found in Ruminiclostridium cellulolyticum (strain ATCC 35319 / DSM 5812 / JCM 6584 / H10) (Clostridium cellulolyticum).